A 138-amino-acid chain; its full sequence is Nucleoside diphosphate kinase (138 aa).

The ATP site is built by Lys10, Phe58, Arg86, Thr92, Arg103, and Asn113. His116 acts as the Pros-phosphohistidine intermediate in catalysis.

This sequence belongs to the NDK family. As to quaternary structure, homotetramer. Requires Mg(2+) as cofactor.

It localises to the cytoplasm. The catalysed reaction is a 2'-deoxyribonucleoside 5'-diphosphate + ATP = a 2'-deoxyribonucleoside 5'-triphosphate + ADP. It catalyses the reaction a ribonucleoside 5'-diphosphate + ATP = a ribonucleoside 5'-triphosphate + ADP. In terms of biological role, major role in the synthesis of nucleoside triphosphates other than ATP. The ATP gamma phosphate is transferred to the NDP beta phosphate via a ping-pong mechanism, using a phosphorylated active-site intermediate. The sequence is that of Nucleoside diphosphate kinase from Actinobacillus pleuropneumoniae serotype 7 (strain AP76).